The sequence spans 343 residues: E3 ubiquitin-protein ligase RNF113A (343 aa).

Residue Ala2 is modified to N-acetylalanine. The segment at 2-60 is important for interaction with SNRNP200/BRR2; it reads AEQLSPGKTTDQVCTFLFKKPGRKVAAGRRKRPICNQESGDSSSSSDEGNTVVRPEKKR. Phosphoserine is present on Ser6. Residues 23–34 show a composition bias toward basic residues; that stretch reads GRKVAAGRRKRP. The segment at 23-95 is disordered; the sequence is GRKVAAGRRK…EEEEENKSES (73 aa). Residues 39-50 show a composition bias toward low complexity; the sequence is ESGDSSSSSDEG. An important for interaction with CXCR4 region spans residues 50-61; it reads GNTVVRPEKKRA. Ser84 and Ser85 each carry phosphoserine. Residues 196 to 224 form a C3H1-type zinc finger; sequence DYQPDICKDYKETGFCGFGDSCKFLHDRS. Ser253 is modified (phosphoserine). The RING-type zinc finger occupies 262–300; sequence CFICRQTFQNPVVTKCRHYFCESCALQHFRTTPRCYVCD. Residues 323–343 form a disordered region; sequence AEGGGASGFPEDPDEDPVPIT. Residues 333–343 show a composition bias toward acidic residues; it reads EDPDEDPVPIT.

As to quaternary structure, component of pre-catalytic and catalytic spliceosome complexes. Interacts (via N-terminus) with the spliceosome subunit SNRNP200/BRR2. Component of the minor spliceosome. Within this complex, interacts with SCNM1 and CRIPT.

It localises to the nucleus. The protein resides in the nucleus speckle. The enzyme catalyses S-ubiquitinyl-[E2 ubiquitin-conjugating enzyme]-L-cysteine + [acceptor protein]-L-lysine = [E2 ubiquitin-conjugating enzyme]-L-cysteine + N(6)-ubiquitinyl-[acceptor protein]-L-lysine.. Its pathway is protein modification; protein ubiquitination. Required for pre-mRNA splicing as component of the spliceosome. As a component of the minor spliceosome, involved in the splicing of U12-type introns in pre-mRNAs. E3 ubiquitin-protein ligase that catalyzes the transfer of ubiquitin onto target proteins. Catalyzes polyubiquitination of SNRNP200/BRR2 with non-canonical 'Lys-63'-linked polyubiquitin chains. Plays a role in DNA repair via its role in the synthesis of 'Lys-63'-linked polyubiquitin chains that recruit ALKBH3 and the ASCC complex to sites of DNA damage by alkylating agents. Ubiquitinates CXCR4, leading to its degradation, and thereby contributes to the termination of CXCR4 signaling. The sequence is that of E3 ubiquitin-protein ligase RNF113A (RNF113A) from Bos taurus (Bovine).